The following is a 78-amino-acid chain: Probable cytochrome c oxidase subunit 6B (78 aa).

Positions 21 to 64 (TKHCWANYVDYYGCVKHYNGDNSKCQTFFNSMNSLCPAAWISEW) constitute a CHCH domain. The short motif at 24 to 34 (CWANYVDYYGC) is the Cx9C motif element. 2 cysteine pairs are disulfide-bonded: C24/C56 and C34/C45. The Cx10C motif motif lies at 45–56 (CQTFFNSMNSLC).

The protein belongs to the cytochrome c oxidase subunit 6B family. As to quaternary structure, component of the cytochrome c oxidase (complex IV, CIV), a multisubunit enzyme composed of a catalytic core of 3 subunits and several supernumerary subunits. The complex exists as a monomer or a dimer and forms supercomplexes (SCs) in the inner mitochondrial membrane with ubiquinol-cytochrome c oxidoreductase (cytochrome b-c1 complex, complex III, CIII).

The protein resides in the mitochondrion inner membrane. Its pathway is energy metabolism; oxidative phosphorylation. In terms of biological role, component of the cytochrome c oxidase, the last enzyme in the mitochondrial electron transport chain which drives oxidative phosphorylation. The respiratory chain contains 3 multisubunit complexes succinate dehydrogenase (complex II, CII), ubiquinol-cytochrome c oxidoreductase (cytochrome b-c1 complex, complex III, CIII) and cytochrome c oxidase (complex IV, CIV), that cooperate to transfer electrons derived from NADH and succinate to molecular oxygen, creating an electrochemical gradient over the inner membrane that drives transmembrane transport and the ATP synthase. Cytochrome c oxidase is the component of the respiratory chain that catalyzes the reduction of oxygen to water. Electrons originating from reduced cytochrome c in the intermembrane space (IMS) are transferred via the dinuclear copper A center (CU(A)) of subunit 2 and heme A of subunit 1 to the active site in subunit 1, a binuclear center (BNC) formed by heme A3 and copper B (CU(B)). The BNC reduces molecular oxygen to 2 water molecules using 4 electrons from cytochrome c in the IMS and 4 protons from the mitochondrial matrix. The sequence is that of Probable cytochrome c oxidase subunit 6B from Dictyostelium discoideum (Social amoeba).